The sequence spans 276 residues: uncharacterized protein (276 aa).

The segment at 1–70 (MSKAKSPIKS…SDDDEEDSPN (70 aa)) is disordered. Over residues 21-35 (VLREKKVKDAEKAEH) the composition is skewed to basic and acidic residues. One can recognise an RRM domain in the interval 105–183 (GVLYVGRLPH…KLLQCKVIPE (79 aa)). A disordered region spans residues 249–276 (VSHPKAASPVASKKSSKKKNKKVLAAHK). Positions 252–261 (PKAASPVASK) are enriched in low complexity. The segment covering 262–276 (KSSKKKNKKVLAAHK) has biased composition (basic residues).

The protein localises to the nucleus. It is found in the nucleolus. This is an uncharacterized protein from Schizosaccharomyces pombe (strain 972 / ATCC 24843) (Fission yeast).